Here is a 209-residue protein sequence, read N- to C-terminus: Thymidylate kinase (209 aa).

Residue 13 to 20 participates in ATP binding; that stretch reads GLEGAGKS.

It belongs to the thymidylate kinase family.

The enzyme catalyses dTMP + ATP = dTDP + ADP. Phosphorylation of dTMP to form dTDP in both de novo and salvage pathways of dTTP synthesis. This Shewanella sp. (strain MR-4) protein is Thymidylate kinase.